We begin with the raw amino-acid sequence, 384 residues long: Large ribosomal subunit protein uL3m (384 aa).

2 disordered regions span residues 80 to 101 and 237 to 262; these read NQVT…KRRE and QEAS…SGSR. Residues 240–249 are compositionally biased toward polar residues; it reads SHGNSLNHRT.

It belongs to the universal ribosomal protein uL3 family. As to quaternary structure, component of the mitochondrial large ribosomal subunit (mt-LSU). Mature N.crassa 74S mitochondrial ribosomes consist of a small (37S) and a large (54S) subunit. The 37S small subunit contains a 16S ribosomal RNA (16S mt-rRNA) and 32 different proteins. The 54S large subunit contains a 23S rRNA (23S mt-rRNA) and 42 different proteins.

The protein localises to the mitochondrion. Component of the mitochondrial ribosome (mitoribosome), a dedicated translation machinery responsible for the synthesis of mitochondrial genome-encoded proteins, including at least some of the essential transmembrane subunits of the mitochondrial respiratory chain. The mitoribosomes are attached to the mitochondrial inner membrane and translation products are cotranslationally integrated into the membrane. The polypeptide is Large ribosomal subunit protein uL3m (mrpl9) (Neurospora crassa (strain ATCC 24698 / 74-OR23-1A / CBS 708.71 / DSM 1257 / FGSC 987)).